The following is a 229-amino-acid chain: Putative N-acetylmannosamine-6-phosphate 2-epimerase (229 aa).

This sequence belongs to the NanE family.

The catalysed reaction is an N-acyl-D-glucosamine 6-phosphate = an N-acyl-D-mannosamine 6-phosphate. It participates in amino-sugar metabolism; N-acetylneuraminate degradation; D-fructose 6-phosphate from N-acetylneuraminate: step 3/5. Converts N-acetylmannosamine-6-phosphate (ManNAc-6-P) to N-acetylglucosamine-6-phosphate (GlcNAc-6-P). This Pediococcus pentosaceus (strain ATCC 25745 / CCUG 21536 / LMG 10740 / 183-1w) protein is Putative N-acetylmannosamine-6-phosphate 2-epimerase.